A 353-amino-acid polypeptide reads, in one-letter code: Aromatic amino acid aminotransferase (353 aa).

Lys-217 bears the N6-(pyridoxal phosphate)lysine mark.

Belongs to the class-II pyridoxal-phosphate-dependent aminotransferase family. In terms of assembly, homodimer. Pyridoxal 5'-phosphate serves as cofactor.

It catalyses the reaction an aromatic L-alpha-amino acid + 2-oxoglutarate = an aromatic oxo-acid + L-glutamate. Aminotransferase that catalyzes the conversion of aromatic amino acids and 2-oxoglutarate into corresponding aromatic oxo acids and L-glutamate. The protein is Aromatic amino acid aminotransferase of Mycobacterium tuberculosis (strain ATCC 25177 / H37Ra).